The sequence spans 379 residues: Deoxyhypusine synthase (379 aa).

NAD(+) contacts are provided by residues 104 to 108, 130 to 132, E136, and D237; these read SNLVS and TAG. Spermidine is bound at residue 135 to 136; that stretch reads EE. D242 is a spermidine binding site. An NAD(+)-binding site is contributed by G293. H298 serves as a coordination point for spermidine. 318–319 lines the NAD(+) pocket; that stretch reads TA. Spermidine contacts are provided by residues 324-326 and 333-339; these read GSD and EAVSWGK. K339 functions as the Nucleophile in the catalytic mechanism. 352–353 provides a ligand contact to NAD(+); the sequence is DA.

The protein belongs to the deoxyhypusine synthase family. In terms of assembly, homotetramer. Requires NAD(+) as cofactor.

It carries out the reaction [eIF5A protein]-L-lysine + spermidine = [eIF5A protein]-deoxyhypusine + propane-1,3-diamine. It functions in the pathway protein modification; eIF5A hypusination. Its function is as follows. Catalyzes the NAD-dependent oxidative cleavage of spermidine and the subsequent transfer of the butylamine moiety of spermidine to the epsilon-amino group of a specific lysine residue of the eIF-5A precursor protein to form the intermediate deoxyhypusine residue. Also able to produce homospermidine from putrescine. The protein is Deoxyhypusine synthase (DHS1) of Nicotiana tabacum (Common tobacco).